A 749-amino-acid polypeptide reads, in one-letter code: Chaperone protein dnaK3 (749 aa).

T198 is subject to Phosphothreonine; by autocatalysis. Composition is skewed to basic and acidic residues over residues 643–653, 661–694, and 711–724; these read RWDADPWDRSR, YDDRRSPVSDPYRGERWVEEQTSMSRREPVRDRN, and PTWEEDQPPRRDRS. The disordered stretch occupies residues 643–749; it reads RWDADPWDRS…GWDDDDDEWF (107 aa). Residues 740–749 show a composition bias toward acidic residues; the sequence is GWDDDDDEWF.

It belongs to the heat shock protein 70 family.

In terms of biological role, acts as a chaperone. The polypeptide is Chaperone protein dnaK3 (dnaK3) (Synechococcus elongatus (strain ATCC 33912 / PCC 7942 / FACHB-805) (Anacystis nidulans R2)).